The primary structure comprises 378 residues: MNVWLNMLTTTGLGAIIGGYTNHLAIKMLFRPHRPIYIGKFRVPFTPGLIPKRRDELAVQLGKMVVDHLLTAEGIGKKLTDENFQREMIQWAQIEVDKLLMNERSLRDVLEKWELAHVEEKAVQEIEEMLMKKVDTFVSKYYTYTWEQALPQFVHEKVEEMIPKAATFILTRGTQFFESDEGKARLQKMIDDFFASRGTLLNIVGMFLGNVSVVDRVQPEVIKFLQQEGTKQLLRDVLQKEWQKFKGREVKELASFIEKEMIVKYIVSTTKTRDIVSGFLNQSVQKICEPVRTNIVETLVPNIVQKGLTWGVNNTAHILKRFRLAEVVQQEVSTFSTERLEELVLSITKNELKMITYLGALLGGTIGLMQGILLLFLM.

A helical membrane pass occupies residues 358–378; it reads LGALLGGTIGLMQGILLLFLM.

It belongs to the UPF0754 family.

The protein localises to the cell membrane. In Bacillus cytotoxicus (strain DSM 22905 / CIP 110041 / 391-98 / NVH 391-98), this protein is UPF0754 membrane protein Bcer98_0694.